The following is a 336-amino-acid chain: MQKNLTRWLLTCCIMVVAMIIVGGITRLTDSGLSIVEWRPVTGILPPFSYDTWQAEFAKYKAFPEYNAVNYGMTLSEFKFIYLLEFVHRLLGRATGLIYILPLIYFYFKGIIKNRDILSYIIVLLLFCVQGFMGWYMVKSGLVNHPSVSHFRLAFHLIIAVIIYHLLFYKLVKNCCDILLIPSQINLKLPLIFSVAAIAMIYVQIFLGALVAGLDAGLIYNSFPLMGGNFIPIEIKDNFISFKNWYDPVFVQFIHRLGAYSLSIIVIALIISLLKVKNPKLNKVAFYLSIALLIQLSTGVITLLYHVPIIAASMHQFFAIVLLSVVIWCYSLIKNS.

Transmembrane regions (helical) follow at residues 5–25 (LTRWLLTCCIMVVAMIIVGGI), 92–112 (GRATGLIYILPLIYFYFKGII), 117–137 (ILSYIIVLLLFCVQGFMGWYM), 153–173 (LAFHLIIAVIIYHLLFYKLVK), 191–211 (LIFSVAAIAMIYVQIFLGALV), 253–273 (FIHRLGAYSLSIIVIALIISL), 284–304 (VAFYLSIALLIQLSTGVITLL), and 307–327 (VPIIAASMHQFFAIVLLSVVI). Position 255 (His255) interacts with heme. His315 lines the heme pocket.

Belongs to the COX15/CtaA family. Type 2 subfamily. In terms of assembly, interacts with CtaB. Heme b is required as a cofactor.

The protein resides in the cell membrane. The catalysed reaction is Fe(II)-heme o + 2 A + H2O = Fe(II)-heme a + 2 AH2. Its pathway is porphyrin-containing compound metabolism; heme A biosynthesis; heme A from heme O: step 1/1. In terms of biological role, catalyzes the conversion of heme O to heme A by two successive hydroxylations of the methyl group at C8. The first hydroxylation forms heme I, the second hydroxylation results in an unstable dihydroxymethyl group, which spontaneously dehydrates, resulting in the formyl group of heme A. The sequence is that of Heme A synthase from Rickettsia bellii (strain RML369-C).